The chain runs to 192 residues: Erythropoietin (192 aa).

The N-terminal stretch at 1–26 is a signal peptide; the sequence is MGVPERPTLLLLLSLLLIPLGLPVLC. A disulfide bridge connects residues cysteine 33 and cysteine 187. Asparagine 50, asparagine 64, and asparagine 109 each carry an N-linked (GlcNAc...) asparagine glycan.

It belongs to the EPO/TPO family. In terms of tissue distribution, produced by kidney or liver of adult mammals and by liver of fetal or neonatal mammals.

It is found in the secreted. Hormone involved in the regulation of erythrocyte proliferation and differentiation and the maintenance of a physiological level of circulating erythrocyte mass. Binds to EPOR leading to EPOR dimerization and JAK2 activation thereby activating specific downstream effectors, including STAT1 and STAT3. The sequence is that of Erythropoietin (Epo) from Rattus norvegicus (Rat).